A 54-amino-acid chain; its full sequence is Large ribosomal subunit protein bL33 (54 aa).

Belongs to the bacterial ribosomal protein bL33 family.

This is Large ribosomal subunit protein bL33 from Symbiobacterium thermophilum (strain DSM 24528 / JCM 14929 / IAM 14863 / T).